A 543-amino-acid chain; its full sequence is Hydroxylamine reductase (543 aa).

4 residues coordinate [4Fe-4S] cluster: Cys3, Cys6, Cys15, and Cys21. Hybrid [4Fe-2O-2S] cluster is bound by residues His244, Glu268, Cys312, Cys399, Cys427, Cys452, Glu486, and Lys488. Cys399 is subject to Cysteine persulfide.

It belongs to the HCP family. Requires [4Fe-4S] cluster as cofactor. Hybrid [4Fe-2O-2S] cluster is required as a cofactor.

The protein localises to the cytoplasm. The catalysed reaction is A + NH4(+) + H2O = hydroxylamine + AH2 + H(+). Functionally, catalyzes the reduction of hydroxylamine to form NH(3) and H(2)O. In Methanocella arvoryzae (strain DSM 22066 / NBRC 105507 / MRE50), this protein is Hydroxylamine reductase.